The chain runs to 165 residues: NADPH-dependent 7-cyano-7-deazaguanine reductase (165 aa).

Positions Met1–Ala24 are disordered. Cys56 serves as the catalytic Thioimide intermediate. Asp63 functions as the Proton donor in the catalytic mechanism. Residues Val78–Ser80 and Met97–Glu98 contribute to the substrate site.

Belongs to the GTP cyclohydrolase I family. QueF type 1 subfamily.

The protein resides in the cytoplasm. It carries out the reaction 7-aminomethyl-7-carbaguanine + 2 NADP(+) = 7-cyano-7-deazaguanine + 2 NADPH + 3 H(+). It functions in the pathway tRNA modification; tRNA-queuosine biosynthesis. Functionally, catalyzes the NADPH-dependent reduction of 7-cyano-7-deazaguanine (preQ0) to 7-aminomethyl-7-deazaguanine (preQ1). The polypeptide is NADPH-dependent 7-cyano-7-deazaguanine reductase (Nitratidesulfovibrio vulgaris (strain ATCC 29579 / DSM 644 / CCUG 34227 / NCIMB 8303 / VKM B-1760 / Hildenborough) (Desulfovibrio vulgaris)).